We begin with the raw amino-acid sequence, 108 residues long: UPF0060 membrane protein DSY4629 (108 aa).

4 consecutive transmembrane segments (helical) span residues 5–25 (IILF…VWLW), 31–51 (PFWY…IPTL), 60–80 (VYAA…WGID), and 86–106 (NYDW…LWAP).

It belongs to the UPF0060 family.

The protein localises to the cell membrane. In Desulfitobacterium hafniense (strain Y51), this protein is UPF0060 membrane protein DSY4629.